The sequence spans 221 residues: Pyridoxal phosphate homeostasis protein (221 aa).

K26 is subject to N6-(pyridoxal phosphate)lysine.

The protein belongs to the pyridoxal phosphate-binding protein YggS/PROSC family.

Functionally, pyridoxal 5'-phosphate (PLP)-binding protein, which is involved in PLP homeostasis. This is Pyridoxal phosphate homeostasis protein from Corynebacterium glutamicum (strain ATCC 13032 / DSM 20300 / JCM 1318 / BCRC 11384 / CCUG 27702 / LMG 3730 / NBRC 12168 / NCIMB 10025 / NRRL B-2784 / 534).